The chain runs to 294 residues: MATSRGDDLLPEIVVVTGMSGAGRSTAARALEDLDWFVVDNLPPALLPTMIDLAARTRGAVPQIAAVVDVRSMAFTEDLLSTVEDLRSRGIGARVVFLEASDETLVRRFESVRRPHPLQGDGRLTDGISRERELLRSIRGEADLVVDTSQLNVHQLKAKMVGFFGKARETRLRANVVSFGYKHGLPVDADLVLDCRFLPNPHWVPELRPLTGQDEPVRDYVLAQRGAKEMLDSYTEVLRLLVSGYQREGKHYMTLAVGCTGGKHRSVAMSEQLAARLRDEGVEVNIIHRDLGRE.

Residue 18–25 (GMSGAGRS) coordinates ATP. Position 69–72 (69–72 (DVRS)) interacts with GTP.

This sequence belongs to the RapZ-like family.

Displays ATPase and GTPase activities. This chain is Nucleotide-binding protein Tfu_2020, found in Thermobifida fusca (strain YX).